A 253-amino-acid polypeptide reads, in one-letter code: Hydroxyacylglutathione hydrolase (253 aa).

Residues His59, His61, Asp63, His64, His118, Asp143, and His181 each contribute to the Zn(2+) site.

It belongs to the metallo-beta-lactamase superfamily. Glyoxalase II family. Monomer. The cofactor is Zn(2+).

The catalysed reaction is an S-(2-hydroxyacyl)glutathione + H2O = a 2-hydroxy carboxylate + glutathione + H(+). It participates in secondary metabolite metabolism; methylglyoxal degradation; (R)-lactate from methylglyoxal: step 2/2. Its function is as follows. Thiolesterase that catalyzes the hydrolysis of S-D-lactoyl-glutathione to form glutathione and D-lactic acid. The protein is Hydroxyacylglutathione hydrolase of Prochlorococcus marinus (strain SARG / CCMP1375 / SS120).